We begin with the raw amino-acid sequence, 196 residues long: C-type lectin domain family 2 member F (196 aa).

The interval 1–21 is disordered; it reads MNAQCLKKPEEGESSPGTGDK. Residues 1–41 lie on the Cytoplasmic side of the membrane; that stretch reads MNAQCLKKPEEGESSPGTGDKILQRNSLRAISPESSAKLYC. A helical; Signal-anchor for type II membrane protein transmembrane segment spans residues 42–62; that stretch reads CCGVIMVLTVAVVALSVALPA. Residues 63–196 are Extracellular-facing; sequence TKTEQILINK…SRSSNYMLQC (134 aa). A disulfide bond links Cys77 and Cys88. A C-type lectin domain is found at 84–187; that stretch reads VGNKCFYFSE…DYIPRKWICS (104 aa). The N-linked (GlcNAc...) asparagine glycan is linked to Asn97. Residues Cys105 and Cys186 are joined by a disulfide bond.

The protein localises to the cell membrane. Functionally, lectin-type cell surface receptor. This is C-type lectin domain family 2 member F (Clec2f) from Mus musculus (Mouse).